A 182-amino-acid chain; its full sequence is Inner membrane-spanning protein YciB (182 aa).

Transmembrane regions (helical) follow at residues Gly-20–Tyr-42, Leu-55–Leu-75, Leu-76–Phe-96, Leu-123–Phe-143, and Phe-153–Met-173.

It belongs to the YciB family.

The protein localises to the cell inner membrane. Functionally, plays a role in cell envelope biogenesis, maintenance of cell envelope integrity and membrane homeostasis. The sequence is that of Inner membrane-spanning protein YciB from Polynucleobacter asymbioticus (strain DSM 18221 / CIP 109841 / QLW-P1DMWA-1) (Polynucleobacter necessarius subsp. asymbioticus).